The primary structure comprises 284 residues: uncharacterized protein (284 aa).

This is an uncharacterized protein from Streptomyces fradiae (Streptomyces roseoflavus).